We begin with the raw amino-acid sequence, 202 residues long: uncharacterized protein (202 aa).

The 78-residue stretch at 1–78 (MKLVGSYTSP…YIELMNVAPA (78 aa)) folds into the GST N-terminal domain. Glutathione is bound by residues Ser-9, Val-49, and 62-63 (DS). The GST C-terminal domain occupies 83-202 (DPLESLRVRK…SFARTEPPKA (120 aa)).

The protein belongs to the GST superfamily. HSP26 family.

Glutathione (GSH) transferase homolog, that might be involved in selenium metabolism. This is an uncharacterized protein from Escherichia coli (strain K12).